A 227-amino-acid chain; its full sequence is Cytochrome c oxidase subunit 2 (227 aa).

Residues 1-14 lie on the Mitochondrial intermembrane side of the membrane; the sequence is MAHPMQLGFQDAAS. A helical transmembrane segment spans residues 15–45; it reads PIMEELLYFHDHTLMIVFMISSLVLYIISLM. At 46–59 the chain is on the mitochondrial matrix side; that stretch reads LSTELTHTSTMDAQ. The chain crosses the membrane as a helical span at residues 60 to 87; that stretch reads EVETVWTILPAVILILIALPSLRILYMM. Residues 88 to 227 are Mitochondrial intermembrane-facing; sequence DEINTPSMTL…YFEEWLLKSL (140 aa). Cu cation-binding residues include His161, Cys196, Glu198, Cys200, His204, and Met207. Glu198 contributes to the Mg(2+) binding site. Position 218 is a phosphotyrosine (Tyr218).

Belongs to the cytochrome c oxidase subunit 2 family. Component of the cytochrome c oxidase (complex IV, CIV), a multisubunit enzyme composed of 14 subunits. The complex is composed of a catalytic core of 3 subunits MT-CO1, MT-CO2 and MT-CO3, encoded in the mitochondrial DNA, and 11 supernumerary subunits COX4I, COX5A, COX5B, COX6A, COX6B, COX6C, COX7A, COX7B, COX7C, COX8 and NDUFA4, which are encoded in the nuclear genome. The complex exists as a monomer or a dimer and forms supercomplexes (SCs) in the inner mitochondrial membrane with NADH-ubiquinone oxidoreductase (complex I, CI) and ubiquinol-cytochrome c oxidoreductase (cytochrome b-c1 complex, complex III, CIII), resulting in different assemblies (supercomplex SCI(1)III(2)IV(1) and megacomplex MCI(2)III(2)IV(2)). Found in a complex with TMEM177, COA6, COX18, COX20, SCO1 and SCO2. Interacts with TMEM177 in a COX20-dependent manner. Interacts with COX20. Interacts with COX16. Cu cation is required as a cofactor.

The protein localises to the mitochondrion inner membrane. The enzyme catalyses 4 Fe(II)-[cytochrome c] + O2 + 8 H(+)(in) = 4 Fe(III)-[cytochrome c] + 2 H2O + 4 H(+)(out). In terms of biological role, component of the cytochrome c oxidase, the last enzyme in the mitochondrial electron transport chain which drives oxidative phosphorylation. The respiratory chain contains 3 multisubunit complexes succinate dehydrogenase (complex II, CII), ubiquinol-cytochrome c oxidoreductase (cytochrome b-c1 complex, complex III, CIII) and cytochrome c oxidase (complex IV, CIV), that cooperate to transfer electrons derived from NADH and succinate to molecular oxygen, creating an electrochemical gradient over the inner membrane that drives transmembrane transport and the ATP synthase. Cytochrome c oxidase is the component of the respiratory chain that catalyzes the reduction of oxygen to water. Electrons originating from reduced cytochrome c in the intermembrane space (IMS) are transferred via the dinuclear copper A center (CU(A)) of subunit 2 and heme A of subunit 1 to the active site in subunit 1, a binuclear center (BNC) formed by heme A3 and copper B (CU(B)). The BNC reduces molecular oxygen to 2 water molecules using 4 electrons from cytochrome c in the IMS and 4 protons from the mitochondrial matrix. The protein is Cytochrome c oxidase subunit 2 (MT-CO2) of Nycticebus coucang (Slow loris).